Consider the following 207-residue polypeptide: Outer-membrane lipoprotein carrier protein (207 aa).

The signal sequence occupies residues 1–23; sequence MMKPHNLFQFLAVCSLTVAVASA.

It belongs to the LolA family. Monomer.

It is found in the periplasm. Participates in the translocation of lipoproteins from the inner membrane to the outer membrane. Only forms a complex with a lipoprotein if the residue after the N-terminal Cys is not an aspartate (The Asp acts as a targeting signal to indicate that the lipoprotein should stay in the inner membrane). The sequence is that of Outer-membrane lipoprotein carrier protein from Neisseria gonorrhoeae (strain ATCC 700825 / FA 1090).